Reading from the N-terminus, the 445-residue chain is Polyadenylate-binding protein RBP47A (445 aa).

The span at 1-12 shows a compositional bias: polar residues; sequence MQTPNNNGSTDS. Disordered regions lie at residues 1 to 45 and 93 to 117; these read MQTP…WQQQ and AAYQ…GGDD. Positions 22-35 are enriched in pro residues; it reads TPPPPLQQSTPPPQ. 2 stretches are compositionally biased toward low complexity: residues 36–45 and 93–108; these read QQQQQQWQQQ and AAYQ…SQQQ. RRM domains are found at residues 119–199, 213–292, and 327–399; these read KTLW…WASF, LSIF…IATP, and STIF…WGRS.

This sequence belongs to the polyadenylate-binding RBP47 family. In terms of assembly, interacts with the poly(A) tail of mRNA in nucleus. In terms of tissue distribution, expressed in leaves, stems, flowers, and seedlings.

It is found in the nucleus. The protein localises to the cytoplasmic granule. Its function is as follows. Heterogeneous nuclear ribonucleoprotein (hnRNP)-protein binding the poly(A) tail of mRNA and probably involved in some steps of pre-mRNA maturation. This Arabidopsis thaliana (Mouse-ear cress) protein is Polyadenylate-binding protein RBP47A (RBP47A).